The primary structure comprises 365 residues: 7-methylxanthine methyltransferase PCS1 (365 aa).

Tyr-19 contributes to the S-adenosyl-L-homocysteine binding site. Thr-26 contributes to the caffeine binding site. Cys-62, Asn-67, Asp-99, Leu-100, Ser-134, and Phe-135 together coordinate S-adenosyl-L-homocysteine. Tyr-152, His-155, and Trp-156 together coordinate caffeine. Residue Asn-173 participates in Mg(2+) binding. Residue His-221 participates in caffeine binding. Positions 259, 261, and 262 each coordinate Mg(2+). Phe-317 is a caffeine binding site.

This sequence belongs to the methyltransferase superfamily. Type-7 methyltransferase family. The cofactor is Mg(2+).

The enzyme catalyses 1,7-dimethylxanthine + S-adenosyl-L-methionine = caffeine + S-adenosyl-L-homocysteine + H(+). It carries out the reaction 7-methylxanthine + S-adenosyl-L-methionine = theobromine + S-adenosyl-L-homocysteine + H(+). It participates in alkaloid biosynthesis. In terms of biological role, involved in the biosynthesis of caffeine. Catalyzes the conversion of 7-methylxanthine (7mX) to theobromine, and, to some extent, the conversion of paraxanthine to caffeine, but seems not able to convert theobromine to caffeine. This is 7-methylxanthine methyltransferase PCS1 from Camellia ptilophylla (Cocoa tea).